A 63-amino-acid chain; its full sequence is Large ribosomal subunit protein uL29 (63 aa).

The protein belongs to the universal ribosomal protein uL29 family.

In Salmonella agona (strain SL483), this protein is Large ribosomal subunit protein uL29.